The sequence spans 146 residues: MFKEFKEFAMKGNMVSLAIGVVIGGAFSKIVTSLVNDIIMPLVGLLMGRVDFSNLFFTLGSGNFKTVQEAKDAGVATVNYGIFINNIIDFLIVAFSIFIIIQQISKLTKKKGENIVPDKKKCKYCYTEINSQATRCPNCTSELKEN.

Helical transmembrane passes span 15-35 (VSLA…TSLV) and 81-101 (GIFI…FIII).

It belongs to the MscL family. As to quaternary structure, homopentamer.

It is found in the cell membrane. Functionally, channel that opens in response to stretch forces in the membrane lipid bilayer. May participate in the regulation of osmotic pressure changes within the cell. The protein is Large-conductance mechanosensitive channel of Clostridium beijerinckii (strain ATCC 51743 / NCIMB 8052) (Clostridium acetobutylicum).